The following is a 162-amino-acid chain: 2-C-methyl-D-erythritol 2,4-cyclodiphosphate synthase (162 aa).

A divalent metal cation is bound by residues D9 and H11. 4-CDP-2-C-methyl-D-erythritol 2-phosphate is bound by residues 9 to 11 and 37 to 38; these read DFH and HS. H45 contacts a divalent metal cation. 4-CDP-2-C-methyl-D-erythritol 2-phosphate-binding positions include 59–61, 64–68, 135–138, and R145; these read DIG, FPDTD, and TTSE.

Belongs to the IspF family. As to quaternary structure, homotrimer. It depends on a divalent metal cation as a cofactor.

The enzyme catalyses 4-CDP-2-C-methyl-D-erythritol 2-phosphate = 2-C-methyl-D-erythritol 2,4-cyclic diphosphate + CMP. The protein operates within isoprenoid biosynthesis; isopentenyl diphosphate biosynthesis via DXP pathway; isopentenyl diphosphate from 1-deoxy-D-xylulose 5-phosphate: step 4/6. In terms of biological role, involved in the biosynthesis of isopentenyl diphosphate (IPP) and dimethylallyl diphosphate (DMAPP), two major building blocks of isoprenoid compounds. Catalyzes the conversion of 4-diphosphocytidyl-2-C-methyl-D-erythritol 2-phosphate (CDP-ME2P) to 2-C-methyl-D-erythritol 2,4-cyclodiphosphate (ME-CPP) with a corresponding release of cytidine 5-monophosphate (CMP). The protein is 2-C-methyl-D-erythritol 2,4-cyclodiphosphate synthase of Leptospira biflexa serovar Patoc (strain Patoc 1 / Ames).